The sequence spans 305 residues: Carbamate kinase (305 aa).

Belongs to the carbamate kinase family.

The protein resides in the cytoplasm. The enzyme catalyses hydrogencarbonate + NH4(+) + ATP = carbamoyl phosphate + ADP + H2O + H(+). It functions in the pathway metabolic intermediate metabolism; carbamoyl phosphate degradation; CO(2) and NH(3) from carbamoyl phosphate: step 1/1. The chain is Carbamate kinase (arcC) from Thermoplasma acidophilum (strain ATCC 25905 / DSM 1728 / JCM 9062 / NBRC 15155 / AMRC-C165).